The sequence spans 120 residues: Immunoglobulin lambda variable 4-60 (120 aa).

The signal sequence occupies residues M1–S21. Positions Q22 to S46 are framework-1. In terms of domain architecture, Ig-like spans P23 to T120. C43 and C113 are oxidised to a cystine. The tract at residues S47–I53 is complementarity-determining-1. The framework-2 stretch occupies residues I54–K70. Residues L71–Y77 form a complementarity-determining-2 region. The segment at N78–C113 is framework-3. The complementarity-determining-3 stretch occupies residues E114–T120.

In terms of assembly, immunoglobulins are composed of two identical heavy chains and two identical light chains; disulfide-linked.

It localises to the secreted. Its subcellular location is the cell membrane. Its function is as follows. V region of the variable domain of immunoglobulin light chains that participates in the antigen recognition. Immunoglobulins, also known as antibodies, are membrane-bound or secreted glycoproteins produced by B lymphocytes. In the recognition phase of humoral immunity, the membrane-bound immunoglobulins serve as receptors which, upon binding of a specific antigen, trigger the clonal expansion and differentiation of B lymphocytes into immunoglobulins-secreting plasma cells. Secreted immunoglobulins mediate the effector phase of humoral immunity, which results in the elimination of bound antigens. The antigen binding site is formed by the variable domain of one heavy chain, together with that of its associated light chain. Thus, each immunoglobulin has two antigen binding sites with remarkable affinity for a particular antigen. The variable domains are assembled by a process called V-(D)-J rearrangement and can then be subjected to somatic hypermutations which, after exposure to antigen and selection, allow affinity maturation for a particular antigen. The sequence is that of Immunoglobulin lambda variable 4-60 from Homo sapiens (Human).